A 93-amino-acid polypeptide reads, in one-letter code: Small ribosomal subunit protein bS20 (93 aa).

It belongs to the bacterial ribosomal protein bS20 family.

Binds directly to 16S ribosomal RNA. The polypeptide is Small ribosomal subunit protein bS20 (Dictyoglomus turgidum (strain DSM 6724 / Z-1310)).